The sequence spans 100 residues: UPF0213 protein YhbQ (100 aa).

The 76-residue stretch at 2–77 folds into the GIY-YIG domain; it reads TPWFLYLIRT…KQLTKRQKER (76 aa).

Belongs to the UPF0213 family.

This is UPF0213 protein YhbQ from Shigella dysenteriae serotype 1 (strain Sd197).